A 512-amino-acid chain; its full sequence is Acid-sensing ion channel 2 (512 aa).

Residues 1-37 are Cytoplasmic-facing; sequence MDLKESPSEGSLQPSSIQIFANTSTLHGIRHIFVYGP. 2 positions are modified to phosphoserine: Ser8 and Ser11. The chain crosses the membrane as a helical span at residues 38–58; that stretch reads LTIRRVLWAVAFVGSLGLLLV. At 59–427 the chain is on the extracellular side; it reads ESSERVSYYF…EQKKAYEVAA (369 aa). 6 disulfide bridges follow: Cys92–Cys193, Cys289–Cys364, Cys307–Cys360, Cys311–Cys358, Cys320–Cys342, and Cys322–Cys334. 2 N-linked (GlcNAc...) asparagine glycosylation sites follow: Asn365 and Asn392. Residues 428–448 traverse the membrane as a helical segment; that stretch reads LLGDIGGQMGLFIGASILTIL. Residues 441-443 carry the GAS motif; ion selectivity filter motif; it reads GAS. Residues 449 to 512 lie on the Cytoplasmic side of the membrane; that stretch reads ELFDYIYELI…ALGTLEEIAC (64 aa).

It belongs to the amiloride-sensitive sodium channel (TC 1.A.6) family. ASIC2 subfamily. In terms of assembly, can form homotrimers. Heterotrimer; forms functional heterotrimers producing channel with different properties. Forms heterotrimers with ASIC1; while ASIC1 determines current amplitude, ASIC2 influences the properties of the current. Forms heterotrimers with ASIC3; resulting in channels with distinct properties. Interacts with STOM; STOM regulates the gating of ASIC2-containing channels. Interacts with PICK1; promotes ASIC3 phosphorylation by PKC and activation of ASIC2/ASIC3 heterotrimers. Expressed by sensory neurons. Expressed by nociceptive sensory neurons, spiral ganglion (SG) neurons and the retina (at protein level). Expressed in outer nuclear layer of retina (photoreceptors) and to a lower extent in distal and proximal inner nuclear layer.

Its subcellular location is the cell membrane. It catalyses the reaction Na(+)(in) = Na(+)(out). The catalysed reaction is K(+)(in) = K(+)(out). It carries out the reaction Li(+)(in) = Li(+)(out). Inhibited by the diuretic drug amiloride. Its function is as follows. Forms pH-gated trimeric sodium channels that act as postsynaptic excitatory sensors in the nervous system. Upon extracellular acidification, these channels generate rapid, transient inward currents that fully desensitize. Highly selective for sodium, they are permeable to other cations. By forming heterotrimeric channels with ASIC1, could contribute to synaptic plasticity, learning, and memory. Additionally, as acid sensors at nerve terminals, plays a role in mechanosensation and phototransduction. Functionally, has no pH-gated sodium channel activity per se but can associate with other ASICs to produce functional channels with specific properties. The polypeptide is Acid-sensing ion channel 2 (Mus musculus (Mouse)).